The sequence spans 513 residues: 2-isopropylmalate synthase (513 aa).

The 263-residue stretch at 7-269 (VYIFDTTLRD…TTGIVTEELF (263 aa)) folds into the Pyruvate carboxyltransferase domain. Mn(2+)-binding residues include D16, H204, H206, and N240. The regulatory domain stretch occupies residues 393 to 513 (ALQFLSVHCG…KEEERTCPQL (121 aa)).

This sequence belongs to the alpha-IPM synthase/homocitrate synthase family. LeuA type 1 subfamily. In terms of assembly, homodimer. The cofactor is Mn(2+).

The protein localises to the cytoplasm. It catalyses the reaction 3-methyl-2-oxobutanoate + acetyl-CoA + H2O = (2S)-2-isopropylmalate + CoA + H(+). The protein operates within amino-acid biosynthesis; L-leucine biosynthesis; L-leucine from 3-methyl-2-oxobutanoate: step 1/4. Functionally, catalyzes the condensation of the acetyl group of acetyl-CoA with 3-methyl-2-oxobutanoate (2-ketoisovalerate) to form 3-carboxy-3-hydroxy-4-methylpentanoate (2-isopropylmalate). The chain is 2-isopropylmalate synthase from Solidesulfovibrio magneticus (strain ATCC 700980 / DSM 13731 / RS-1) (Desulfovibrio magneticus).